The chain runs to 306 residues: Curved DNA-binding protein (306 aa).

The 65-residue stretch at 5–69 folds into the J domain; sequence DYYAIMGVKP…QRRAEYDQMW (65 aa).

It localises to the cytoplasm. Its subcellular location is the nucleoid. In terms of biological role, DNA-binding protein that preferentially recognizes a curved DNA sequence. It is probably a functional analog of DnaJ; displays overlapping activities with DnaJ, but functions under different conditions, probably acting as a molecular chaperone in an adaptive response to environmental stresses other than heat shock. Lacks autonomous chaperone activity; binds native substrates and targets them for recognition by DnaK. Its activity is inhibited by the binding of CbpM. This chain is Curved DNA-binding protein, found in Escherichia coli O8 (strain IAI1).